Reading from the N-terminus, the 261-residue chain is Leucine-rich repeat-containing protein 18 (261 aa).

LRR repeat units follow at residues 28–49, 51–72, 74–95, 97–118, 122–144, 145–167, and 168–189; these read GKKR…ILRL, DMDE…ISKF, NLRW…IGQM, SLLY…VELK, NIRA…GALK, ELHE…SKLP, and KLKK…EIFI.

The protein resides in the cytoplasm. Its function is as follows. May be involved in the regulation of spermatogenesis and sperm maturation. The polypeptide is Leucine-rich repeat-containing protein 18 (LRRC18) (Homo sapiens (Human)).